Consider the following 362-residue polypeptide: Protein RecA (362 aa).

77-84 contacts ATP; the sequence is GPESSGKT.

This sequence belongs to the RecA family.

Its subcellular location is the cytoplasm. Can catalyze the hydrolysis of ATP in the presence of single-stranded DNA, the ATP-dependent uptake of single-stranded DNA by duplex DNA, and the ATP-dependent hybridization of homologous single-stranded DNAs. It interacts with LexA causing its activation and leading to its autocatalytic cleavage. The protein is Protein RecA of Nitrobacter winogradskyi (strain ATCC 25391 / DSM 10237 / CIP 104748 / NCIMB 11846 / Nb-255).